The sequence spans 122 residues: E3 ubiquitin-protein ligase PPP1R11 (122 aa).

Positions 1–12 are enriched in polar residues; the sequence is MAEVPGTSSETI. Positions 1–33 are disordered; sequence MAEVPGTSSETITETVQTGTPPPPQQEGRSLTI. Threonine 20 is subject to Phosphothreonine. An atypical RING finger domain 1 region spans residues 55–65; it reads HLGRRSSKCCC. Positions 72–122 are disordered; that stretch reads QFGESSSESEGDDEEGCGSAHCILGHGRRGHGQREGGGTTVPPSSGGTNPH. Positions 78-87 are enriched in acidic residues; it reads SESEGDDEEG. Positions 88-97 are atypical RING finger domain 2; sequence CGSAHCILGH. Over residues 111–122 the composition is skewed to low complexity; it reads TVPPSSGGTNPH.

It catalyses the reaction S-ubiquitinyl-[E2 ubiquitin-conjugating enzyme]-L-cysteine + [acceptor protein]-L-lysine = [E2 ubiquitin-conjugating enzyme]-L-cysteine + N(6)-ubiquitinyl-[acceptor protein]-L-lysine.. It participates in protein modification; protein ubiquitination. Its function is as follows. Atypical E3 ubiquitin-protein ligase which ubiquitinates TLR2 at 'Lys-754' leading to its degradation by the proteasome. Inhibitor of protein phosphatase 1. The polypeptide is E3 ubiquitin-protein ligase PPP1R11 (ppp1r11) (Danio rerio (Zebrafish)).